A 344-amino-acid polypeptide reads, in one-letter code: Fructose-1,6-bisphosphatase class 1 (344 aa).

4 residues coordinate Mg(2+): glutamate 90, aspartate 109, leucine 111, and aspartate 112. Substrate-binding positions include 112 to 115 (DGSS) and asparagine 200. Mg(2+) is bound at residue glutamate 271.

Belongs to the FBPase class 1 family. As to quaternary structure, homotetramer. Mg(2+) serves as cofactor.

Its subcellular location is the cytoplasm. It catalyses the reaction beta-D-fructose 1,6-bisphosphate + H2O = beta-D-fructose 6-phosphate + phosphate. It functions in the pathway carbohydrate biosynthesis; gluconeogenesis. The sequence is that of Fructose-1,6-bisphosphatase class 1 from Nitrobacter vulgaris.